The primary structure comprises 147 residues: Protein phosphatase 1 regulatory subunit 14B (147 aa).

The segment at M1–K55 is disordered. A2 is subject to N-acetylalanine. A Phosphoserine modification is found at S21. At Y29 the chain carries Phosphotyrosine. S32 bears the Phosphoserine mark. T57 carries the phosphothreonine modification. Residues D61–M103 are a coiled coil.

Belongs to the PP1 inhibitor family. Post-translationally, phosphorylated primarily on Thr-57 by PKC (in vitro). An unknown Ser is also phosphorylated by PKC (in vitro). Ubiquitous. Expressed at low levels.

It localises to the cytoplasm. Inhibitor of PPP1CA. Has over 50-fold higher inhibitory activity when phosphorylated. This chain is Protein phosphatase 1 regulatory subunit 14B (PPP1R14B), found in Homo sapiens (Human).